The sequence spans 359 residues: Small ribosomal subunit biogenesis GTPase RsgA (359 aa).

In terms of domain architecture, CP-type G spans 101–259; the sequence is KRKGSQAIAS…LMDNPGIREV (159 aa). GTP-binding positions include 149–152 and 201–209; these read NKKD and GSSGAGKST. Zn(2+)-binding residues include cysteine 284, cysteine 289, histidine 291, and cysteine 297. Residues 331-359 form a disordered region; the sequence is DPEEARKKKQKDKQMSKALQKRLKDKGRK. Residues 349 to 359 show a composition bias toward basic residues; the sequence is LQKRLKDKGRK.

This sequence belongs to the TRAFAC class YlqF/YawG GTPase family. RsgA subfamily. As to quaternary structure, monomer. Associates with 30S ribosomal subunit, binds 16S rRNA. The cofactor is Zn(2+).

Its subcellular location is the cytoplasm. Functionally, one of several proteins that assist in the late maturation steps of the functional core of the 30S ribosomal subunit. Helps release RbfA from mature subunits. May play a role in the assembly of ribosomal proteins into the subunit. Circularly permuted GTPase that catalyzes slow GTP hydrolysis, GTPase activity is stimulated by the 30S ribosomal subunit. This chain is Small ribosomal subunit biogenesis GTPase RsgA, found in Leptospira interrogans serogroup Icterohaemorrhagiae serovar copenhageni (strain Fiocruz L1-130).